The chain runs to 141 residues: Hemoglobin subunit alpha (141 aa).

Residues 1–141 form the Globin domain; it reads VLSPADKTNV…VSTVLTSKYR (141 aa). Residue S3 is modified to Phosphoserine. K7 is modified (N6-succinyllysine). T8 is modified (phosphothreonine). K11 is modified (N6-succinyllysine). The residue at position 16 (K16) is an N6-acetyllysine; alternate. At K16 the chain carries N6-succinyllysine; alternate. Phosphotyrosine is present on Y24. The residue at position 35 (S35) is a Phosphoserine. K40 bears the N6-succinyllysine mark. S49 is modified (phosphoserine). H58 contributes to the O2 binding site. H87 is a heme b binding site. A Phosphoserine modification is found at S102. T108 bears the Phosphothreonine mark. A Phosphoserine modification is found at S124. T134 and T137 each carry phosphothreonine. A Phosphoserine modification is found at S138.

Belongs to the globin family. Heterotetramer of two alpha chains and two beta chains. Red blood cells.

Its function is as follows. Involved in oxygen transport from the lung to the various peripheral tissues. Functionally, hemopressin acts as an antagonist peptide of the cannabinoid receptor CNR1. Hemopressin-binding efficiently blocks cannabinoid receptor CNR1 and subsequent signaling. This Pteronura brasiliensis (Giant otter) protein is Hemoglobin subunit alpha (HBA).